Here is a 148-residue protein sequence, read N- to C-terminus: Ribonuclease pancreatic (148 aa).

The signal sequence occupies residues 1–25 (MGLEKSLMLFPLLVLVLGLVQPSLG). Residues lysine 32 and arginine 35 each contribute to the substrate site. Catalysis depends on histidine 37, which acts as the Proton acceptor. Cystine bridges form between cysteine 50–cysteine 108, cysteine 64–cysteine 119, cysteine 82–cysteine 134, and cysteine 89–cysteine 96. Residues 65 to 69 (KPVNT), lysine 90, and arginine 109 each bind substrate. The active-site Proton donor is histidine 143.

Belongs to the pancreatic ribonuclease family. As to quaternary structure, monomer. Interacts with and forms tight 1:1 complexes with RNH1. Dimerization of two such complexes may occur. Interaction with RNH1 inhibits this protein. As to expression, pancreas.

It is found in the secreted. The enzyme catalyses an [RNA] containing cytidine + H2O = an [RNA]-3'-cytidine-3'-phosphate + a 5'-hydroxy-ribonucleotide-3'-[RNA].. It carries out the reaction an [RNA] containing uridine + H2O = an [RNA]-3'-uridine-3'-phosphate + a 5'-hydroxy-ribonucleotide-3'-[RNA].. In terms of biological role, endonuclease that catalyzes the cleavage of RNA on the 3' side of pyrimidine nucleotides. Acts on single-stranded and double-stranded RNA. The chain is Ribonuclease pancreatic (RNASE1) from Gerbilliscus gambianus (Gambian gerbil).